Consider the following 159-residue polypeptide: Phosphopantetheine adenylyltransferase (159 aa).

Threonine 10 is a binding site for substrate. ATP-binding positions include 10–11 and histidine 18; that span reads TF. Substrate contacts are provided by lysine 42, leucine 74, and arginine 88. Residues 89 to 91, glutamate 99, and 124 to 130 contribute to the ATP site; these read GLR and NSFISST.

The protein belongs to the bacterial CoaD family. As to quaternary structure, homohexamer. Requires Mg(2+) as cofactor.

The protein resides in the cytoplasm. The enzyme catalyses (R)-4'-phosphopantetheine + ATP + H(+) = 3'-dephospho-CoA + diphosphate. Its pathway is cofactor biosynthesis; coenzyme A biosynthesis; CoA from (R)-pantothenate: step 4/5. Its function is as follows. Reversibly transfers an adenylyl group from ATP to 4'-phosphopantetheine, yielding dephospho-CoA (dPCoA) and pyrophosphate. The sequence is that of Phosphopantetheine adenylyltransferase from Shewanella pealeana (strain ATCC 700345 / ANG-SQ1).